Consider the following 1319-residue polypeptide: ERAD-associated E3 ubiquitin-protein ligase DOA10 (1319 aa).

At M1 the chain carries N-acetylmethionine. Over 1 to 131 the chain is Cytoplasmic; it reads MDVDSDVNVS…LTFFEKARLA (131 aa). The RING-CH-type zinc finger occupies 31–100; that stretch reads DDAPSGATCR…DICHYPIQFK (70 aa). Positions 39, 42, 56, 58, 66, 69, 90, and 93 each coordinate Zn(2+). A helical membrane pass occupies residues 132–152; it reads LTIGLAAVLYIIGVPLVWNMF. The Lumenal portion of the chain corresponds to 153 to 203; sequence GKLYTMMLDGSSPYPGDFLKSLIYGYDQSATPELTTRAIFYQLLQNHSFTS. A helical transmembrane segment spans residues 204-224; it reads LQFIMIVILHIALYFQYDMIV. The Cytoplasmic segment spans residues 225–468; it reads REDVFSKMVF…GPLVINLKLK (244 aa). Over residues 291-306 the composition is skewed to low complexity; it reads ADNNNNVINPRNDNVP. Disordered regions lie at residues 291 to 315 and 329 to 381; these read ADNN…DHRN and EATE…EADY. A helical transmembrane segment spans residues 469–489; that stretch reads LLNVIAYFIIAVVFTAIYLAI. The Lumenal portion of the chain corresponds to 490–491; sequence SY. Residues 492 to 512 form a helical membrane-spanning segment; the sequence is LFPTFIGFGLLKIYFGIFKVI. At 513–626 the chain is on the cytoplasmic side; it reads LRGLCHLYYL…LFALKCTFKV (114 aa). The chain crosses the membrane as a helical span at residues 627-647; the sequence is FTLFFIELAGFPILAGVMLDF. At 648-660 the chain is on the lumenal side; the sequence is SLFCPILASNSRM. A helical membrane pass occupies residues 661–681; it reads LWVPSICAIWPPFSLFVYWTI. The Cytoplasmic segment spans residues 682-739; it reads GTLYMYWFAKYIGMIRKNIIRPGVLFFIRSPEDPNIKILHDSLIHPMSIQLSRLCLSM. Residues 740 to 760 traverse the membrane as a helical segment; sequence FIYAIFIVLGFGFHTRIFFPF. At 761–777 the chain is on the lumenal side; it reads MLKSNLLSVPEAYKPTS. The chain crosses the membrane as a helical span at residues 778-797; that stretch reads IISWKFNTILLTLYFTKRIL. The Cytoplasmic segment spans residues 798–965; that stretch reads ESSSYVKPLL…YVPPDFRLRY (168 aa). Residues 966–986 traverse the membrane as a helical segment; it reads MTLLGLVWLFASILMLGVTFI. Topologically, residues 987–1019 are lumenal; sequence SQALINFVCSFGFLPVVKLLLGERNKVYVAWKE. Residues 1020–1040 form a helical membrane-spanning segment; sequence LSDISYSYLNIYYVCVGSVCL. Residues 1041–1113 lie on the Cytoplasmic side of the membrane; it reads SKIAKDILHF…IFDSMLVKYN (73 aa). The chain crosses the membrane as a helical span at residues 1114 to 1134; it reads LMVFIAIMIAVIRTMVSWVVL. Residues 1135-1168 lie on the Lumenal side of the membrane; the sequence is TDGILACYNYLTIRVFGNSSYTIGNSKWFKYDES. The chain crosses the membrane as a helical span at residues 1169 to 1189; sequence LLFVVWIISSMVNFGTGYKSL. Residues 1190–1213 lie on the Cytoplasmic side of the membrane; that stretch reads KLFFRNRNTSKLNFLKTMALELFK. A helical transmembrane segment spans residues 1214–1234; sequence QGFLHMVIYVLPIIILSLVFL. Over 1235–1270 the chain is Lumenal; sequence RDVSTKQIIDISHGSRSFTLSLNESFPTWTRMQDIY. Residues 1271–1291 traverse the membrane as a helical segment; it reads FGLLIALESFTFFFQATVLFI. Topologically, residues 1292–1319 are cytoplasmic; the sequence is QWFKSTVQNVKDEVYTKGRALENLPDES.

This sequence belongs to the DOA10/MARCH6 family. As to quaternary structure, component of the DOA10 ubiquitin ligase complex which contains E3 ligase SSM4/DOA10 and CDC48-binding protein UBX2/SEL1. The DOA10 complex interacts with the heterotrimeric CDC48-NPL4-UFD1 ATPase complex which is recruited by UBX2/SEL1 via its interaction with CDC48. Interacts with its associated ubiquitin conjugating enzymes UBC6 and UBC7 with its membrane anchor CUE1. Interacts with PEX29.

Its subcellular location is the endoplasmic reticulum membrane. It localises to the nucleus inner membrane. It catalyses the reaction S-ubiquitinyl-[E2 ubiquitin-conjugating enzyme]-L-cysteine + [acceptor protein]-L-lysine = [E2 ubiquitin-conjugating enzyme]-L-cysteine + N(6)-ubiquitinyl-[acceptor protein]-L-lysine.. It participates in protein modification; protein ubiquitination. In terms of biological role, E3 ubiquitin-protein ligase which accepts ubiquitin specifically from endoplasmic reticulum-associated UBC6 and UBC7 E2 ligases, and transfers it to substrates promoting their degradation. Mediates the degradation of a broad range of substrates, including endoplasmic reticulum membrane proteins (ERQC), soluble nuclear proteins and soluble cytoplasmic proteins (CytoQC). Component of the DOA10 ubiquitin ligase complex, which is part of the ERAD-C pathway responsible for the rapid degradation of membrane proteins with misfolded cytoplasmic domains. ERAD-C substrates are ubiquitinated through DOA10 in conjunction with the E2 ubiquitin-conjugating enzymes UBC6 and UBC7-CUE1. Ubiquitinated substrates are then removed to the cytosol via the action of the UFD1-NPL4-CDC48/p97 (UNC) AAA ATPase complex and targeted to the proteasome. Also recognizes the N-terminally acetylated residue of proteins as degradation signal (degron). N-terminally acetylated target proteins include MATALPHA2, TBF1, SLK19, YMR090W, HIS3, HSP104, UBP6 and ARO8. Catalyzes ubiquitination of mislocalized tail-anchored proteins that are extracted from the mitochondrion membrane by MSP1: following extraction, mistargeted proteins are transferred to the endoplasmic reticulum, where they are ubiquitinated by DOA10 and degraded by the proteasome. The polypeptide is ERAD-associated E3 ubiquitin-protein ligase DOA10 (SSM4) (Saccharomyces cerevisiae (strain ATCC 204508 / S288c) (Baker's yeast)).